Reading from the N-terminus, the 194-residue chain is Imidazoleglycerol-phosphate dehydratase (194 aa).

The protein belongs to the imidazoleglycerol-phosphate dehydratase family.

It is found in the cytoplasm. It catalyses the reaction D-erythro-1-(imidazol-4-yl)glycerol 3-phosphate = 3-(imidazol-4-yl)-2-oxopropyl phosphate + H2O. It functions in the pathway amino-acid biosynthesis; L-histidine biosynthesis; L-histidine from 5-phospho-alpha-D-ribose 1-diphosphate: step 6/9. The polypeptide is Imidazoleglycerol-phosphate dehydratase (Halalkalibacterium halodurans (strain ATCC BAA-125 / DSM 18197 / FERM 7344 / JCM 9153 / C-125) (Bacillus halodurans)).